A 261-amino-acid polypeptide reads, in one-letter code: Indole-3-glycerol phosphate synthase (261 aa).

It belongs to the TrpC family.

It catalyses the reaction 1-(2-carboxyphenylamino)-1-deoxy-D-ribulose 5-phosphate + H(+) = (1S,2R)-1-C-(indol-3-yl)glycerol 3-phosphate + CO2 + H2O. Its pathway is amino-acid biosynthesis; L-tryptophan biosynthesis; L-tryptophan from chorismate: step 4/5. In Campylobacter hominis (strain ATCC BAA-381 / DSM 21671 / CCUG 45161 / LMG 19568 / NCTC 13146 / CH001A), this protein is Indole-3-glycerol phosphate synthase.